We begin with the raw amino-acid sequence, 756 residues long: Deoxynucleotidyltransferase terminal-interacting protein 2 (756 aa).

Residues 1 to 99 are disordered; that stretch reads MVVTRSARAK…AESNYSVSEH (99 aa). Low complexity predominate over residues 9–21; sequence AKASIQAASAESS. Ser21 carries the phosphoserine modification. Polar residues-rich tracts occupy residues 35–55 and 80–96; these read PESS…TGKQ and EPST…NYSV. Position 117 is a phosphoserine (Ser117). Thr129 carries the phosphothreonine modification. A phosphoserine mark is found at Ser141, Ser145, Ser148, Ser184, and Ser194. The tract at residues 156-261 is disordered; it reads PTEKTTGARR…LSEINKPNFY (106 aa). The segment covering 201 to 211 has biased composition (basic residues); sequence RRTRSMQRKLK. Glycyl lysine isopeptide (Lys-Gly) (interchain with G-Cter in SUMO2) cross-links involve residues Lys217 and Lys220. Residue Thr232 is modified to Phosphothreonine. Phosphoserine is present on residues Ser239, Ser251, and Ser253. A compositionally biased stretch (polar residues) spans 242–256; sequence RQTSHLQARSLSEIN. Residues Lys257, Lys316, and Lys321 each participate in a glycyl lysine isopeptide (Lys-Gly) (interchain with G-Cter in SUMO2) cross-link. Residues Ser324 and Ser330 each carry the phosphoserine modification. Lys345 is covalently cross-linked (Glycyl lysine isopeptide (Lys-Gly) (interchain with G-Cter in SUMO2)). At Ser381 the chain carries Phosphoserine. Residue Lys384 forms a Glycyl lysine isopeptide (Lys-Gly) (interchain with G-Cter in SUMO2) linkage. Phosphoserine occurs at positions 434 and 512. Residues 505-542 are a coiled coil; that stretch reads LEEEDKASEVAIEEEKEEEEDEKSEEDSSDHDENEDEF. The tract at residues 510–547 is disordered; that stretch reads KASEVAIEEEKEEEEDEKSEEDSSDHDENEDEFSDEED. Residues 548 to 605 are tdBR region; mediates interaction with DNTT; that stretch reads FLNSTKAKLLKLTSSSIDPGLSIKQLGGLYINFNADKLQSNKRTLTQIKEKKKNELLQ. Lys558 is covalently cross-linked (Glycyl lysine isopeptide (Lys-Gly) (interchain with G-Cter in SUMO2)). A Phosphoserine modification is found at Ser569. Residues Lys584 and Lys606 each participate in a glycyl lysine isopeptide (Lys-Gly) (interchain with G-Cter in SUMO2) cross-link. Thr610 is subject to Phosphothreonine. Residues Lys626, Lys649, Lys658, Lys686, and Lys731 each participate in a glycyl lysine isopeptide (Lys-Gly) (interchain with G-Cter in SUMO2) cross-link.

Forms a ternary complex with DNTT and core histone; interaction with PCNA releases DNTT and H2A/H2B histones from this ternary complex. Interacts with ESR1, ESR2, PPARG and RXRA. Part of the small subunit (SSU) processome, composed of more than 70 proteins and the RNA chaperone small nucleolar RNA (snoRNA) U3. Widely expressed with higher levels in testis.

The protein localises to the nucleus. It is found in the nucleolus. Functionally, regulates the transcriptional activity of DNTT and ESR1. May function as a chromatin remodeling protein. Part of the small subunit (SSU) processome, first precursor of the small eukaryotic ribosomal subunit. During the assembly of the SSU processome in the nucleolus, many ribosome biogenesis factors, an RNA chaperone and ribosomal proteins associate with the nascent pre-rRNA and work in concert to generate RNA folding, modifications, rearrangements and cleavage as well as targeted degradation of pre-ribosomal RNA by the RNA exosome. The sequence is that of Deoxynucleotidyltransferase terminal-interacting protein 2 from Homo sapiens (Human).